Here is a 325-residue protein sequence, read N- to C-terminus: MYNVRTDLAVESREIYKHRYNREIDGVVFEEKTVEEDIKVTNVDILNEEGAKAMEKPIGRYVTIDIPEYTHYDGGIMDEVSHVVAASLEELINLPEERTALVVGLGNWNVTPDAIGPKVVGKLMVTRHLKKVMPDIIDDSVRPVCAIAPGVLGITGIETGEIIKSLVEKIKPDLVVCIDALASRKLERVARTIQISNTGISPGAGVGNHRMQINEESLGIPVIALGVPTVVDAATIANDAMDLVLDEMINQADAGKEFYNILNNIDKNEKGMMIKSLLDPYVGDLMVTPKEIDDIIESVSKIIANGINIALQPNMVLEDINKFLN.

Residues 1 to 7 (MYNVRTD) constitute a propeptide that is removed on maturation.

Belongs to the peptidase A25 family. Homotetramer. Autoproteolytically processed. The inactive tetrameric zymogen termed p46 autoprocesses to a smaller form termed p41, which is active only during spore germination.

The enzyme catalyses Endopeptidase action with P4 Glu or Asp, P1 preferably Glu &gt; Asp, P1' hydrophobic and P2' Ala.. Its function is as follows. Initiates the rapid degradation of small, acid-soluble proteins during spore germination. The polypeptide is Germination protease (Clostridium perfringens (strain 13 / Type A)).